A 539-amino-acid polypeptide reads, in one-letter code: Propionyl-CoA carboxylase beta chain, mitochondrial (539 aa).

The N-terminal 28 residues, 1–28 (MAAAVRVTAARARLRVVVRSLHAGVRSL), are a transit peptide targeting the mitochondrion. The CoA carboxyltransferase N-terminal domain occupies 32-290 (PVSVNERIEN…SNQDPAPIRE (259 aa)). A carboxyltransferase region spans residues 32 to 533 (PVSVNERIEN…SKKVQRPWRK (502 aa)). Serine 71 is modified (phosphoserine). Lysine 99 is modified (N6-acetyllysine; alternate). Lysine 99 bears the N6-succinyllysine; alternate mark. The CoA carboxyltransferase C-terminal domain maps to 294-533 (PSDRLVPELD…SKKVQRPWRK (240 aa)). Positions 325 to 358 (DERDFFEIMPNYAKNIIVGFARMNGRTVGIVGNQ) are acyl-CoA binding. Lysine 474 and lysine 489 each carry N6-acetyllysine; alternate. N6-succinyllysine; alternate is present on residues lysine 474 and lysine 489.

The protein belongs to the AccD/PCCB family. The holoenzyme is a dodecamer composed of 6 PCCA/alpha subunits and 6 PCCB/beta subunits.

It is found in the mitochondrion matrix. The enzyme catalyses propanoyl-CoA + hydrogencarbonate + ATP = (S)-methylmalonyl-CoA + ADP + phosphate + H(+). It catalyses the reaction butanoyl-CoA + hydrogencarbonate + ATP = (2S)-ethylmalonyl-CoA + ADP + phosphate + H(+). The protein operates within metabolic intermediate metabolism; propanoyl-CoA degradation; succinyl-CoA from propanoyl-CoA: step 1/3. This is one of the 2 subunits of the biotin-dependent propionyl-CoA carboxylase (PCC), a mitochondrial enzyme involved in the catabolism of odd chain fatty acids, branched-chain amino acids isoleucine, threonine, methionine, and valine and other metabolites. Propionyl-CoA carboxylase catalyzes the carboxylation of propionyl-CoA/propanoyl-CoA to D-methylmalonyl-CoA/(S)-methylmalonyl-CoA. Within the holoenzyme, the alpha subunit catalyzes the ATP-dependent carboxylation of the biotin carried by the biotin carboxyl carrier (BCC) domain, while the beta subunit then transfers the carboxyl group from carboxylated biotin to propionyl-CoA. Propionyl-CoA carboxylase also significantly acts on butyryl-CoA/butanoyl-CoA, which is converted to ethylmalonyl-CoA/(2S)-ethylmalonyl-CoA at a much lower rate. Other alternative minor substrates include (2E)-butenoyl-CoA/crotonoyl-CoA. The polypeptide is Propionyl-CoA carboxylase beta chain, mitochondrial (Sus scrofa (Pig)).